Here is a 467-residue protein sequence, read N- to C-terminus: Cysteine--tRNA ligase (467 aa).

Cys28 is a Zn(2+) binding site. The short motif at 30 to 40 (PTVYNYIHVGN) is the 'HIGH' region element. Zn(2+) contacts are provided by Cys212, His237, and Glu241. A 'KMSKS' region motif is present at residues 269–273 (KMSKS). Lys272 contacts ATP.

It belongs to the class-I aminoacyl-tRNA synthetase family. As to quaternary structure, monomer. It depends on Zn(2+) as a cofactor.

The protein localises to the cytoplasm. The enzyme catalyses tRNA(Cys) + L-cysteine + ATP = L-cysteinyl-tRNA(Cys) + AMP + diphosphate. The sequence is that of Cysteine--tRNA ligase from Oenococcus oeni (strain ATCC BAA-331 / PSU-1).